Consider the following 37-residue polypeptide: Large ribosomal subunit protein bL36 (37 aa).

This sequence belongs to the bacterial ribosomal protein bL36 family.

The protein is Large ribosomal subunit protein bL36 of Sulfurihydrogenibium sp. (strain YO3AOP1).